Here is a 322-residue protein sequence, read N- to C-terminus: MFEIHPVKKVSVVIPVYNEQESLPELIRRTTTACESLGKEYEILLIDDGSSDNSAHMLVEASQAENSHIVSILLNRNYGQHSAIMAGFSHVTGDLIITLDADLQNPPEEIPRLVAKADEGYDVVGTVRQNRQDSWFRKTASKMINRLIQRTTGKAMGDYGCMLRAYRRHIVDAMLHCHERSTFIPILANIFARRAIEIPVHHAEREFGESKYSFMRLINLMYDLVTCLTTTPLRMLSLLGSIIAIGGFSIAVLLVILRLTFGPQWAAEGVFMLFAVLFTFIGAQFIGMGLLGEYIGRIYTDVRARPRYFVQQVIRPSSKENE.

At 1–235 the chain is on the cytoplasmic side; that stretch reads MFEIHPVKKV…TCLTTTPLRM (235 aa). The chain crosses the membrane as a helical span at residues 236–256; that stretch reads LSLLGSIIAIGGFSIAVLLVI. The Periplasmic portion of the chain corresponds to 257–269; sequence LRLTFGPQWAAEG. The chain crosses the membrane as a helical span at residues 270–290; it reads VFMLFAVLFTFIGAQFIGMGL. At 291 to 322 the chain is on the cytoplasmic side; sequence LGEYIGRIYTDVRARPRYFVQQVIRPSSKENE.

This sequence belongs to the glycosyltransferase 2 family.

The protein localises to the cell inner membrane. The enzyme catalyses UDP-4-deoxy-4-formamido-beta-L-arabinose + di-trans,octa-cis-undecaprenyl phosphate = 4-deoxy-4-formamido-alpha-L-arabinopyranosyl di-trans,octa-cis-undecaprenyl phosphate + UDP. Its pathway is glycolipid biosynthesis; 4-amino-4-deoxy-alpha-L-arabinose undecaprenyl phosphate biosynthesis; 4-amino-4-deoxy-alpha-L-arabinose undecaprenyl phosphate from UDP-4-deoxy-4-formamido-beta-L-arabinose and undecaprenyl phosphate: step 1/2. The protein operates within bacterial outer membrane biogenesis; lipopolysaccharide biosynthesis. In terms of biological role, catalyzes the transfer of 4-deoxy-4-formamido-L-arabinose from UDP to undecaprenyl phosphate. The modified arabinose is attached to lipid A and is required for resistance to polymyxin and cationic antimicrobial peptides. This is Undecaprenyl-phosphate 4-deoxy-4-formamido-L-arabinose transferase from Shigella sonnei (strain Ss046).